We begin with the raw amino-acid sequence, 89 residues long: DNA-binding protein HU (89 aa).

The protein belongs to the bacterial histone-like protein family. As to quaternary structure, homodimer. The dimer interacts with the DNA mimic protein DMP12. It also interacts with the monomeric form of the DNA mimic protein DMP19 with 1:1 stoichiometry.

With respect to regulation, activity is regulated by the DNA mimic protein DMP12. Activity is inhibited in the presence of the DNA mimic protein DMP19, which interacts with HU and prevents the binding of HU to DNA. Histone-like DNA-binding protein which is capable of wrapping DNA to stabilize it, and thus to prevent its denaturation under extreme environmental conditions. This Neisseria meningitidis serogroup B (strain ATCC BAA-335 / MC58) protein is DNA-binding protein HU.